Consider the following 128-residue polypeptide: Large ribosomal subunit protein bL19 (128 aa).

The protein belongs to the bacterial ribosomal protein bL19 family.

Functionally, this protein is located at the 30S-50S ribosomal subunit interface and may play a role in the structure and function of the aminoacyl-tRNA binding site. This is Large ribosomal subunit protein bL19 from Paracidovorax citrulli (strain AAC00-1) (Acidovorax citrulli).